A 447-amino-acid polypeptide reads, in one-letter code: N-succinylarginine dihydrolase (447 aa).

Residues 19-28, Asn-110, and 137-138 each bind substrate; these read AGLSFGNEAS and HR. Glu-174 is an active-site residue. Arg-212 contacts substrate. The active site involves His-248. Asp-250 and Asn-359 together coordinate substrate. The active-site Nucleophile is the Cys-365.

Belongs to the succinylarginine dihydrolase family. As to quaternary structure, homodimer.

The catalysed reaction is N(2)-succinyl-L-arginine + 2 H2O + 2 H(+) = N(2)-succinyl-L-ornithine + 2 NH4(+) + CO2. Its pathway is amino-acid degradation; L-arginine degradation via AST pathway; L-glutamate and succinate from L-arginine: step 2/5. Catalyzes the hydrolysis of N(2)-succinylarginine into N(2)-succinylornithine, ammonia and CO(2). This is N-succinylarginine dihydrolase from Escherichia coli O17:K52:H18 (strain UMN026 / ExPEC).